We begin with the raw amino-acid sequence, 369 residues long: Core histone macro-H2A.1 (369 aa).

N6-lactoyllysine; alternate occurs at positions 7 and 9. The Histone H2A domain maps to 15-90; it reads RSAKAGVIFP…ILLAVANDEE (76 aa). N6-methyllysine is present on Lys18. At Lys116 the chain carries N6-acetyllysine; alternate. Lys116 participates in a covalent cross-link: Glycyl lysine isopeptide (Lys-Gly) (interchain with G-Cter in ubiquitin); alternate. Lys117 participates in a covalent cross-link: Glycyl lysine isopeptide (Lys-Gly) (interchain with G-Cter in ubiquitin). The residue at position 123 (Lys123) is an N6-acetyllysine; alternate. At Lys123 the chain carries N6,N6-dimethyllysine; alternate. Lys123 participates in a covalent cross-link: Glycyl lysine isopeptide (Lys-Gly) (interchain with G-Cter in SUMO2); alternate. The disordered stretch occupies residues 128–180; it reads ITPPPAKKAKSPSQKKTVSKKTGGKKGARKSKKKQGEVSKSASADSTTEGTPA. Thr129 is subject to Phosphothreonine. A compositionally biased stretch (basic residues) spans 144-160; sequence TVSKKTGGKKGARKSKK. The segment covering 165–177 has biased composition (polar residues); that stretch reads VSKSASADSTTEG. Lys167 is covalently cross-linked (Glycyl lysine isopeptide (Lys-Gly) (interchain with G-Cter in SUMO2)). Phosphoserine is present on residues Ser170 and Ser173. Thr178 carries the post-translational modification Phosphothreonine. In terms of domain architecture, Macro spans 184–367; sequence TVLSTKSLFL…IYVQEMAKLD (184 aa). A Glycyl lysine isopeptide (Lys-Gly) (interchain with G-Cter in SUMO2) cross-link involves residue Lys189. Residues Asp203, Ile204, Val226, Ser275, Gly312, Ser313, Gly314, and Asn316 each contribute to the a glycoprotein site. Residue Lys320 forms a Glycyl lysine isopeptide (Lys-Gly) (interchain with G-Cter in SUMO2) linkage.

This sequence belongs to the histone H2A family. As to quaternary structure, the nucleosome is a histone octamer containing two molecules each of H2A, H2B, H3 and H4 assembled in one H3-H4 heterotetramer and two H2A-H2B heterodimers. In terms of processing, ADP-ribosylated. Post-translationally, monoubiquitinated at either Lys-116 or Lys-117. May also be polyubiquitinated. Ubiquitination is mediated by the CUL3/SPOP E3 complex and does not promote proteasomal degradation. Instead, it is required for enrichment in inactive X chromosome chromatin. As to expression, present in liver (at protein level).

Its subcellular location is the nucleus. The protein resides in the chromosome. Functionally, variant histone H2A which replaces conventional H2A in a subset of nucleosomes where it represses transcription. Nucleosomes wrap and compact DNA into chromatin, limiting DNA accessibility to the cellular machineries which require DNA as a template. Histones thereby play a central role in transcription regulation, DNA repair, DNA replication and chromosomal stability. DNA accessibility is regulated via a complex set of post-translational modifications of histones, also called histone code, and nucleosome remodeling. In terms of biological role, isoform that specifically binds poly-ADP-ribose and O-acetyl-ADP-ribose and plays a key role in NAD(+) metabolism. Able to bind to the ends of poly-ADP-ribose chains created by PARP1 and cap them. This prevents PARP1 from further addition of ADP-ribose and thus limits the consumption of nuclear NAD(+), allowing the cell to maintain proper NAD(+) levels in both the nucleus and the mitochondria to promote proper mitochondrial respiration. In contrast to isoform 1, does not bind poly-ADP-ribose. The protein is Core histone macro-H2A.1 of Gallus gallus (Chicken).